Consider the following 321-residue polypeptide: Mas-related G-protein coupled receptor member H (321 aa).

Over 1-35 (MEPLAMTLYPLESTQPTRNKTPNETTWSSEHTDDH) the chain is Extracellular. Asn-23 is a glycosylation site (N-linked (GlcNAc...) asparagine). A helical membrane pass occupies residues 36-56 (TYFLVSLVICSLGLAGNGLLI). Residues 57–71 (WFLIFCIKRKPFTIY) lie on the Cytoplasmic side of the membrane. The chain crosses the membrane as a helical span at residues 72–92 (ILHLAIADFMVLLCSSIMKLV). The Extracellular portion of the chain corresponds to 93–102 (NTFHIYNMTL). Asn-99 carries N-linked (GlcNAc...) asparagine glycosylation. Residues 103–126 (ESYAILFMIFGYNTGLHLLTAISV) form a helical membrane-spanning segment. At 127–147 (ERCLSVLYPIWYQCQRPKHQS) the chain is on the cytoplasmic side. A helical transmembrane segment spans residues 148–168 (AVACMLLWALSVLVSGLENFF). The Extracellular segment spans residues 169-188 (CILEVKPQFPECRYVYIFSC). Residues 189 to 209 (ILTFLVFVPLMIFSNLILFIQ) form a helical membrane-spanning segment. Topologically, residues 210-225 (VCCNLKPRQPTKLYVI) are cytoplasmic. Residues 226-246 (IMTTVILFLVFAMPMKVLLII) form a helical membrane-spanning segment. Residue Gly-247 is a topological domain, extracellular. Residues 248–271 (YYSSSLDDSVWDSLPYLNMLSTIN) traverse the membrane as a helical segment. At 272–320 (CSINPIVYFVVGSLRRKRSRKSLKEALQKVFEEKPVVASRENVTQFSLP) the chain is on the cytoplasmic side.

The protein belongs to the G-protein coupled receptor 1 family. Mas subfamily.

The protein localises to the cell membrane. Functionally, orphan receptor. May regulate nociceptor function and/or development, including the sensation or modulation of pain. The polypeptide is Mas-related G-protein coupled receptor member H (Mrgprh) (Mus musculus (Mouse)).